The chain runs to 219 residues: 3,4-dihydroxy-2-butanone 4-phosphate synthase (219 aa).

Residues Arg37–Glu38, Asp42, Arg150–Thr154, and Glu174 each bind D-ribulose 5-phosphate. Glu38 provides a ligand contact to Mg(2+). His153 contacts Mg(2+).

Belongs to the DHBP synthase family. Homodimer. Mg(2+) is required as a cofactor. Mn(2+) serves as cofactor.

The catalysed reaction is D-ribulose 5-phosphate = (2S)-2-hydroxy-3-oxobutyl phosphate + formate + H(+). It functions in the pathway cofactor biosynthesis; riboflavin biosynthesis; 2-hydroxy-3-oxobutyl phosphate from D-ribulose 5-phosphate: step 1/1. Functionally, catalyzes the conversion of D-ribulose 5-phosphate to formate and 3,4-dihydroxy-2-butanone 4-phosphate. In Edwardsiella ictaluri (strain 93-146), this protein is 3,4-dihydroxy-2-butanone 4-phosphate synthase.